Consider the following 485-residue polypeptide: PSSAFNSPFCTTNSGAPVFNNNSSLTVGARGPVLLEDYHLVEKLANFDRERVPERVVHARGASAKGFFEVTHDITHLTCADFLRAPGVQTPVIVRFSTVIHERGSPETLRDPRGFAVKFYTREGNFDLVGNNFPVFFIRDGMKFPDMVHALKPNPKSHIQENWRVLDFFSHVPESLHMFTFLFDDIGIPQDYRHMDGSGVHTFTLINKAGKSTYVKFHWKPTCGVKSLLEDEAARVGGANHSHATQDLYDSIAAGNYPEWKLFIQTMDPDHEDRFDFDPLDVTKTWPEDILPLQPVGRLVLNKNIDNFSNENEQLAFCPSIVVPGVYYSDDKMLQTRIFSYSDTQRYRLGPNYLQLPANAPKCAHHNNHYDGSMNFMHRDEEIDYFPSRYDPVRHAEKYPIPSTMCTGKREKCVIQKENNFKQPGERYRSFTPDRQERFIRRWVETLSDPRITYEIRSIWISYWSQADKSLGQKLASRLNVRPSI.

Catalysis depends on residues histidine 58 and asparagine 131. Tyrosine 341 lines the heme pocket.

Belongs to the catalase family. Homotetramer. Heme serves as cofactor.

The protein localises to the peroxisome. It catalyses the reaction 2 H2O2 = O2 + 2 H2O. Its function is as follows. Occurs in almost all aerobically respiring organisms and serves to protect cells from the toxic effects of hydrogen peroxide. In Nicotiana plumbaginifolia (Leadwort-leaved tobacco), this protein is Catalase isozyme 1 (CAT1).